A 313-amino-acid chain; its full sequence is Phosphoenolpyruvate phosphomutase (313 aa).

D69 (nucleophile) is an active-site residue.

It belongs to the isocitrate lyase/PEP mutase superfamily. PEP mutase family.

It carries out the reaction phosphoenolpyruvate + H(+) = 3-phosphonopyruvate. It participates in secondary metabolite biosynthesis; bialaphos biosynthesis. Formation of a carbon-phosphorus bond by converting phosphoenolpyruvate (PEP) to phosphonopyruvate (P-Pyr). This is Phosphoenolpyruvate phosphomutase (bcpB) from Streptomyces hygroscopicus.